The primary structure comprises 59 residues: Thrombostatin (59 aa).

4 disulfide bridges follow: Cys3–Cys22, Cys17–Cys37, Cys39–Cys51, and Cys52–Cys57. A Cell attachment site motif is present at residues 43–45 (RGD).

This sequence belongs to the three-finger toxin family. Short-chain subfamily. Antiplatelet toxin sub-subfamily. As to expression, expressed by the venom gland.

The protein resides in the secreted. Inhibits ADP-induced platelet aggregation and inhibits the binding of purified platelet fibrinogen receptor alpha-IIb/beta-3 (ITGA2B/ITGB3) to immobilized fibrinogen. The chain is Thrombostatin from Dendroaspis angusticeps (Eastern green mamba).